We begin with the raw amino-acid sequence, 280 residues long: MIQHAGLGYRRDLAEDFLSLSENSPICFIEAAPENWLKMGGRARKQFDRVAERLPLALHGLSMSLGGQAPLDTDLIDGIKEMMCRYDCTFFSDHLSYCHDGGHLYDLLPLPFTEEMVHHTARRIREVQDRLGCRIAVENTSYYLHSPLAEMNEVEFLNAVAREADCGIHLDVNNIYVNAVNHGLLSPEAFLENVDAGRVCYIHIAGHDAETPELLIDTHGAAVLPTVWDLLELAYTKLPTIPPTLLERDFNFPPFAELEAEVAKIADYQTRAGKEYRRAA.

This sequence belongs to the UPF0276 family.

The sequence is that of UPF0276 protein NGO_1946 from Neisseria gonorrhoeae (strain ATCC 700825 / FA 1090).